We begin with the raw amino-acid sequence, 468 residues long: Zinc finger protein mex-5 (468 aa).

Residues 1 to 19 (MKAASNSVSSAGGSVSPTT) are compositionally biased toward low complexity. Residues 1–32 (MKAASNSVSSAGGSVSPTTTQPPLPPGQSSHP) form a disordered region. Phosphothreonine; by mbk-2 is present on T186. Basic and acidic residues predominate over residues 243 to 254 (NHFHEHRGEKFG). The disordered stretch occupies residues 243 to 269 (NHFHEHRGEKFGRRGFPIPETDSQQPP). C3H1-type zinc fingers lie at residues 270-299 (NYKT…HGLK) and 314-344 (KYKT…HPTD). Residues 414–468 (DLQAGGDYNQPESNEDDLPPHLRRNRRENPPMNKRRTSLSTKWTSEENLGLRGHY) are disordered. Over residues 451-460 (SLSTKWTSEE) the composition is skewed to polar residues. S458 is modified (phosphoserine).

In terms of assembly, interacts (when phosphorylated on Thr-186) with plk-1 (via POLO box domain) and plk-2 (via POLO box domain). Phosphorylation on Ser-458 by par-1 promotes localization of the protein to the anterior cytoplasm of the zygote. Phosphorylation by mbk-1 appears to be required for subsequent phosphorylation by plk-1. Asymmetrically localized to the anterior of the zygote before mitotic division, then differentially distributed to the somatic blastomere precursor cells.

It is found in the cytoplasm. Functions with mex-6 to affect embryonic viability, establish soma germline asymmetry in embryos and establish plk-1, pie-1, mex-1, and pos-1 asymmetry in embryos. Also affects formation of intestinal cells. Binds to mRNA in vitro, and inhibits pgl-3-mediated P-granule formation, probably by competing with pgl-3 for binding to mRNA. Required for neg-1 expression in anterior blastomeres during embryogenesis. This Caenorhabditis elegans protein is Zinc finger protein mex-5.